Here is a 340-residue protein sequence, read N- to C-terminus: MPHHIMSINDSNHVQIGGRKSKLAVVQSEIVKKVIEDTFPNLSCSILALSTLGDKVQTQPLYTFGGKSLWTKELEILLLDSVDEFPKLDLIVHSLKDMPTNLPEEFELGCIFQREDPRDAIVMKQGSSYKSLKDLPAGAIVGTSSIRRSSQLIKNYPHLRFESVRGNIQTRLNKLDQPNNEYCCLILASAGLIRLGLGHRITSYLDDMYYAVGQGALGIEIRKGDDNIKSILKKIEDPIATICCLAERSLMRYLEGGCSVPLGVHSDYNESKQELTLKGIIVSPDGTVSIEDEVIKRITCDEDCEQVGIELGDKLKAKGAKEILDKIDMTRNINARPTEV.

Position 258 is an S-(dipyrrolylmethanemethyl)cysteine (Cys258).

Belongs to the HMBS family. Dipyrromethane is required as a cofactor.

It carries out the reaction 4 porphobilinogen + H2O = hydroxymethylbilane + 4 NH4(+). The protein operates within porphyrin-containing compound metabolism; protoporphyrin-IX biosynthesis; coproporphyrinogen-III from 5-aminolevulinate: step 2/4. Tetrapolymerization of the monopyrrole PBG into the hydroxymethylbilane pre-uroporphyrinogen in several discrete steps. The polypeptide is Porphobilinogen deaminase (HEM3) (Candida albicans (strain SC5314 / ATCC MYA-2876) (Yeast)).